We begin with the raw amino-acid sequence, 373 residues long: Chaperone protein DnaJ (373 aa).

The region spanning 4–68 (NYYQILGVSK…QKRAAYDRLG (65 aa)) is the J domain. The segment at 136–214 (GIEKNISFSS…CHGMGRYHKQ (79 aa)) adopts a CR-type zinc-finger fold. C149, C152, C166, C169, C188, C191, C202, and C205 together coordinate Zn(2+). CXXCXGXG motif repeat units lie at residues 149–156 (CDTCHGSG), 166–173 (CDACSGVG), 188–195 (CHKCQGNG), and 202–209 (CKKCHGMG).

Belongs to the DnaJ family. As to quaternary structure, homodimer. Zn(2+) serves as cofactor.

It localises to the cytoplasm. Participates actively in the response to hyperosmotic and heat shock by preventing the aggregation of stress-denatured proteins and by disaggregating proteins, also in an autonomous, DnaK-independent fashion. Unfolded proteins bind initially to DnaJ; upon interaction with the DnaJ-bound protein, DnaK hydrolyzes its bound ATP, resulting in the formation of a stable complex. GrpE releases ADP from DnaK; ATP binding to DnaK triggers the release of the substrate protein, thus completing the reaction cycle. Several rounds of ATP-dependent interactions between DnaJ, DnaK and GrpE are required for fully efficient folding. Also involved, together with DnaK and GrpE, in the DNA replication of plasmids through activation of initiation proteins. The sequence is that of Chaperone protein DnaJ from Rickettsia africae (strain ESF-5).